Consider the following 400-residue polypeptide: Enoyl-[acyl-carrier-protein] reductase [NADH] (400 aa).

Residues 74–75 (FE), 111–112 (DA), and 139–140 (VA) each bind NAD(+). Tyr-225 lines the substrate pocket. Tyr-235 acts as the Proton donor in catalysis. NAD(+) contacts are provided by residues Lys-244 and 273–275 (VVT).

It belongs to the TER reductase family. In terms of assembly, monomer.

The catalysed reaction is a 2,3-saturated acyl-[ACP] + NAD(+) = a (2E)-enoyl-[ACP] + NADH + H(+). It participates in lipid metabolism; fatty acid biosynthesis. Functionally, involved in the final reduction of the elongation cycle of fatty acid synthesis (FAS II). Catalyzes the reduction of a carbon-carbon double bond in an enoyl moiety that is covalently linked to an acyl carrier protein (ACP). This chain is Enoyl-[acyl-carrier-protein] reductase [NADH], found in Psychromonas ingrahamii (strain DSM 17664 / CCUG 51855 / 37).